Consider the following 582-residue polypeptide: Ubiquilin-1 (582 aa).

Disordered stretches follow at residues 1 to 26 (MAES…AEPK) and 102 to 136 (RPQD…AANS). Position 2 is an N-acetylalanine (Ala2). Positions 28-102 (MKVTVKTPKE…VHLVIKTQNR (75 aa)) constitute a Ubiquitin-like domain. Polar residues predominate over residues 102–135 (RPQDNSAQQTNTTGNSVTSSPAPDSNPTSGPAAN). Positions 169–422 (QLLSNPEMMV…LNNPLFAGNP (254 aa)) are interaction with UBXN4. STI1 domains are found at residues 173 to 201 (NPEM…QLIM) and 203 to 242 (NPQM…MQEM). The segment at 285–365 (NPFASLVSSP…NLVPGAGASM (81 aa)) is disordered. The segment covering 290–304 (LVSSPSSAEGTQPSR) has biased composition (polar residues). Residues 318 to 346 (QTPQSSPASGSTGSTTNTVSTSAGNATST) are compositionally biased toward low complexity. 2 consecutive STI1 domains span residues 381–428 (NPQL…QEQM) and 432–464 (LPTF…QQGL). Residues 481-513 (GLAAGNSGGPAGTTAPSTAPGEDTNPQGGAAEP) form a disordered region. One can recognise a UBA domain in the interval 539 to 579 (RFQQQLEQLSAMGFLNREANLQALIATGGDINAAIERLLGS).

In terms of assembly, monomer and homodimer. Heterodimer with UBQLN2. Binds CD47. Binds NBL1. Binds GABRA1, GABRA2, GABRA3, GABRA6, GABRB1, GABRB2 and GABRB3. Binds UBE3A, BTRC, P4HB and MTOR. Interacts with the proteasome 19S subunit. Interacts (via ubiquitin-like domain) with TREX1; the interaction is direct and may control TREX1 subcellular location. Forms a complex with UBXN4 and VCP. Interacts (via UBA domain) with UBQLN4 (via ubiquitin-like domain). Found in a complex with UBQLN2 and MAP1LC3A/B/C. The monomeric form interacts with PSEN1 and PSEN2. Interacts with ORAI1. Interacts (via UBA domain) with TICAM1. Interacts with EPS15. Interacts (via UBA domain) with UBA52 and (via ubiquitin-like domain) with PSMD3 and PSMD4. Interacts with HERPUD1. Interacts with MAP1LC3A/B/C in the presence of UBQLN4. Interacts (via ubiquitin-like domain) with EPS15 (via UIM domains) and both the ubiquitinated and non-ubiquitinated forms can interact with EPS15. Interacts (via ubiquitin-like domain) with EPS15L1, HGS (via UIM domain) and STAM2 (via UIM domain). Interacts with BCL2L10/BCL-B; in the cytoplasm. Post-translationally, degraded during both macroautophagy and during chaperone-mediated autophagy (CMA). In terms of processing, phosphorylated. Ubiquitinated.

The protein localises to the nucleus. It is found in the cytoplasm. It localises to the endoplasmic reticulum. The protein resides in the cytoplasmic vesicle. Its subcellular location is the autophagosome. The protein localises to the cell membrane. Plays an important role in the regulation of different protein degradation mechanisms and pathways including ubiquitin-proteasome system (UPS), autophagy and endoplasmic reticulum-associated protein degradation (ERAD) pathway. Mediates the proteasomal targeting of misfolded or accumulated proteins for degradation by binding (via UBA domain) to their polyubiquitin chains and by interacting (via ubiquitin-like domain) with the subunits of the proteasome. Plays a role in the ERAD pathway via its interaction with ER-localized proteins UBXN4, VCP and HERPUD1 and may form a link between the polyubiquitinated ERAD substrates and the proteasome. Plays a role in unfolded protein response (UPR) by attenuating the induction of UPR-inducible genes, DDTI3/CHOP, HSPA5 and PDIA2 during ER stress. Involved in the regulation of macroautophagy and autophagosome formation; required for maturation of autophagy-related protein LC3 from the cytosolic form LC3-I to the membrane-bound form LC3-II and may assist in the maturation of autophagosomes to autolysosomes by mediating autophagosome-lysosome fusion. Negatively regulates the TICAM1/TRIF-dependent toll-like receptor signaling pathway by decreasing the abundance of TICAM1 via the autophagic pathway. Promotes the ubiquitination and lysosomal degradation of ORAI1, consequently down-regulating the ORAI1-mediated Ca2+ mobilization. Suppresses the maturation and proteasomal degradation of amyloid beta A4 protein (A4) by stimulating the lysine 63 (K63)-linked polyubiquitination. Delays the maturation of A4 by sequestering it in the Golgi apparatus and preventing its transport to the cell surface for subsequent processing. Promotes the surface expression of GABA-A receptors. Ubiquitinates BCL2L10 and thereby stabilizes protein abundance. The sequence is that of Ubiquilin-1 (Ubqln1) from Rattus norvegicus (Rat).